The following is a 244-amino-acid chain: Protein TIFY 10b (244 aa).

A Tify domain is found at 97–132; the sequence is QEPEKRQLTIFYGGKVLVFNDFPADKAKGLMQLASK. Positions 174–244 are disordered; it reads QKPARANASD…AVVKPIERGQ (71 aa). The Jas signature appears at 185–210; that stretch reads PIARKASLHRFLEKRKDRLNAKTPYQ. The Nuclear localization signal signature appears at 187 to 194; that stretch reads ARKASLHR. A compositionally biased stretch (basic and acidic residues) spans 194–204; the sequence is RFLEKRKDRLN.

Belongs to the TIFY/JAZ family. As to quaternary structure, interacts with BHLH148. Interacts with COI1A and COI1B in a coronatine-dependent manner. Coronatine is an analog of jasmonoyl isoleucine (JA-Ile). Ubiquitinated. Targeted for degradation by the SCF(COI1) E3 ubiquitin ligase-proteasome pathway during jasmonate signaling.

It localises to the nucleus. Repressor of jasmonate responses. This is Protein TIFY 10b from Oryza sativa subsp. japonica (Rice).